The following is a 435-amino-acid chain: Endoglucanase EG-1 (435 aa).

An N-terminal signal peptide occupies residues 1–20 (MARGTALLGLTSLLLGLVNG). Residue Q21 is modified to Pyrrolidone carboxylic acid. 3 disulfides stabilise this stretch: C38–C44, C71–C93, and C83–C89. N-linked (GlcNAc...) asparagine glycosylation is present at N109. 6 disulfides stabilise this stretch: C160/C385, C192/C215, C196/C214, C235/C254, C243/C248, and C259/C335. E217 serves as the catalytic Nucleophile. The active-site Proton donor is the E222. N267 is a glycosylation site (N-linked (GlcNAc...) asparagine).

Belongs to the glycosyl hydrolase 7 (cellulase C) family.

The protein resides in the secreted. The catalysed reaction is Endohydrolysis of (1-&gt;4)-beta-D-glucosidic linkages in cellulose, lichenin and cereal beta-D-glucans.. Functionally, the biological conversion of cellulose to glucose generally requires three types of hydrolytic enzymes: (1) Endoglucanases which cut internal beta-1,4-glucosidic bonds; (2) Exocellobiohydrolases that cut the disaccharide cellobiose from the non-reducing end of the cellulose polymer chain; (3) Beta-1,4-glucosidases which hydrolyze the cellobiose and other short cello-oligosaccharides to glucose. The chain is Endoglucanase EG-1 (EG-1) from Humicola insolens (Soft-rot fungus).